The sequence spans 628 residues: Kelch-like protein diablo (628 aa).

The interval 1–56 (MGDLPGSTGGGSGPAAAGNASGNSSSAGNTGLGVAGTTGVDRPPSPARLSHTSEKH) is disordered. Residues 14-29 (PAAAGNASGNSSSAGN) are compositionally biased toward low complexity. The 68-residue stretch at 74 to 141 (CDVVLNVGGR…CYTAHIIVEE (68 aa)) folds into the BTB domain. In terms of domain architecture, BACK spans 176–278 (CLGIRAFADT…SPKFLVGTVG (103 aa)). Kelch repeat units lie at residues 325-371 (VLFA…VLND), 373-419 (LYAV…VLDG), 420-466 (FLYA…VLGG), 468-513 (LYAI…VFNN), 515-560 (IYAV…VVNG), and 561-607 (QLYA…VMRA).

It functions in the pathway protein modification; protein ubiquitination. Its function is as follows. Probable substrate-specific adapter of an E3 ubiquitin-protein ligase complex which mediates the ubiquitination and subsequent proteasomal degradation of target proteins. May have a role in synapse differentiation and growth. This is Kelch-like protein diablo from Drosophila persimilis (Fruit fly).